Here is a 738-residue protein sequence, read N- to C-terminus: MCIGPAPTPETEEELPPSPQHVLTEKDHQRLRFQRNIGVSAHIDSGKTTLTERILYYTGRISQIHEVRGRDAVGAKMDSMDLEREKGITIQSAATFCDWETTDVATGNKQNYAINIIDTPGHVDFTIEVERALRVLDGAILVLCAVAGVQSQTTTVDRQMRRYGVPRISFINKMDRPGANPWRIVNQIRSKLRIPAAAVQVPIGIEDEFKGVVDLVHWRSIYNEGQKGNEVVISQEIPESVMELAKAKRNELVEQLAEVDEEIGELFLNDELPNNDQIAAAIRRSTIALKFSPVFLGSAIKNTAVQPMLDGVCAYLPNPAESEVLAHDTSLPSSAPQVQLTPAADAPLVGLAFKLEEGRFGQLTYMRVYQGTLKKGNQIYNARTGKKVKVPRLVRMHSNEMEDIESIGPGEICAIFGVECSSGDTFTDGSTSFSMTNMYVPEPVISLSIKPKGIETPNFSRALNRFQKEDPTFKVHIDHESKETIISGMGELHLEIYVERMRREYNTDCVTGKPRVAFRETITQRADFAYTHKKQTGGAGQYAKVVGYIEPMEPDPETGKDVAFESVVMGGNIPTNFIPAIEKGFYEALEKGALSGNAIFGCRFVLKDGAFHAVDSSELAFRLATIGAFREAFKMAKGVILEPIMNVEVVAPVEFQSQVIGGLNTRRGTIVDSEVRDDEFTAAAEVALNDMFGYSNQLRGSTQGKGEFSMEYKHHMPVLPNLQKDLEEAYRRTLVVKK.

Positions 1 to 20 (MCIGPAPTPETEEELPPSPQ) are disordered. The region spanning 32–320 (RFQRNIGVSA…GVCAYLPNPA (289 aa)) is the tr-type G domain. Residues 41-48 (AHIDSGKT), 118-122 (DTPGH), and 172-175 (NKMD) each bind GTP.

Belongs to the TRAFAC class translation factor GTPase superfamily. Classic translation factor GTPase family. EF-G/EF-2 subfamily.

Its subcellular location is the mitochondrion. It functions in the pathway protein biosynthesis; polypeptide chain elongation. Mitochondrial GTPase that catalyzes the GTP-dependent ribosomal translocation step during translation elongation. During this step, the ribosome changes from the pre-translocational (PRE) to the post-translocational (POST) state as the newly formed A-site-bound peptidyl-tRNA and P-site-bound deacylated tRNA move to the P and E sites, respectively. Catalyzes the coordinated movement of the two tRNA molecules, the mRNA and conformational changes in the ribosome. The sequence is that of Elongation factor G, mitochondrial from Laccaria bicolor (strain S238N-H82 / ATCC MYA-4686) (Bicoloured deceiver).